We begin with the raw amino-acid sequence, 525 residues long: DNA polymerase epsilon subunit 2 (525 aa).

It belongs to the DNA polymerase epsilon subunit B family. In terms of assembly, component of the epsilon DNA polymerase complex consisting of four subunits: the catalytic subunit PolE1/DNApol-epsilon255 and the accessory subunits PolE2/DNApol-epsilon58, Chrac-14/DNApolE3 and PolE4.

Its subcellular location is the nucleus. Its function is as follows. Accessory component of the DNA polymerase epsilon complex. Participates in DNA repair and in chromosomal DNA replication. Has a role in the entrance and progression through S phase. Has a role in endoreplication. Essential for viability and tissue development. The sequence is that of DNA polymerase epsilon subunit 2 from Drosophila melanogaster (Fruit fly).